The sequence spans 135 residues: Probable disulfide formation protein (135 aa).

The helical transmembrane segment at 7-26 threads the bilayer; it reads SYCLYLAWLFSCIGTLMSVY. Residues Cys-36 and Cys-39 are joined by a disulfide bond. The next 2 helical transmembrane spans lie at 41-60 and 67-84; these read YQRICLFPLVVILGIAAYRE and YTLPLALVGFGIAIYQVC. A disulfide bridge connects residues Cys-96 and Cys-101. The helical transmembrane segment at 109–131 threads the bilayer; that stretch reads GFITMPMASAAAFCAIACLLVLA.

The protein belongs to the DsbB family. BdbC subfamily.

Its subcellular location is the cell inner membrane. In terms of biological role, required for disulfide bond formation in some proteins. This is Probable disulfide formation protein from Chlamydia trachomatis serovar D (strain ATCC VR-885 / DSM 19411 / UW-3/Cx).